We begin with the raw amino-acid sequence, 344 residues long: DNA-directed RNA polymerase subunit alpha (344 aa).

Residues 1-238 (MKVIKTAPLI…KQLGVFGERP (238 aa)) form an alpha N-terminal domain (alpha-NTD) region. Residues 254 to 344 (AKDLSAKIES…EKLEDKGGND (91 aa)) form an alpha C-terminal domain (alpha-CTD) region.

Belongs to the RNA polymerase alpha chain family. Homodimer. The RNAP catalytic core consists of 2 alpha, 1 beta, 1 beta' and 1 omega subunit. When a sigma factor is associated with the core the holoenzyme is formed, which can initiate transcription.

It catalyses the reaction RNA(n) + a ribonucleoside 5'-triphosphate = RNA(n+1) + diphosphate. Its function is as follows. DNA-dependent RNA polymerase catalyzes the transcription of DNA into RNA using the four ribonucleoside triphosphates as substrates. This Helicobacter pylori (strain J99 / ATCC 700824) (Campylobacter pylori J99) protein is DNA-directed RNA polymerase subunit alpha.